The sequence spans 662 residues: MASAGKPALDDSRRGTGSPKIKGRENAKDTLCRNITIYGRCRYEDKGCAFNHDPHKVNSSNQSDSKKRFNVDSPSFTPSLLSSNGSSPTSTPATTKKMTTISPKAANAAPFQPRSVVSRSNASTPGLRQDTVTPDWTVAEVQEFVPQGFDNSHLAALQGNGNGPITSTSPFDPFVTTPTPLSAGGAVGPVQPNPYSHDAAAALGGAAFFPGAAGFQQPVQYHLYAPIGPHNQNTLGYQRNVHDLFLPNDFREELQKKAAATLQTLPNTQLPAQIDYFHSLVPLDLNHQKNATIFGFPSWVYKAQSSKDGNYYALRRLEGFRLTNEKAIRSVQAWKRVCNGSVVTVHDAFTSRSFQDSSLIFVTDYHPLSKTLAEQHLGAGQQRFQGRHNVQHIPEQILWGYMTQIANALKAIHSNGLAARVIDASKILLTGKNRIRLNACAIMDVVQFDSQRTVADLQRQDLVNFGQLIVTLGANSPTVMHNPTKAMEHFTRAYSPQLKNSVFWLLNGMQKDQDRNIDVFITGISSQLMSTFDSALHLDDQLTSDLSRELENGRLVRLMAKLNFVNERPEYEHDRQWSENGERYFLKIFRDYVFHQVDAQGDPVVDLGHVITCLNKLDAGTEEKITLISRDEQSCFIVSYKELKKALESSFQALMKPARRMH.

Disordered regions lie at residues 1 to 29 (MASA…NAKD) and 53 to 133 (DPHK…DTVT). A C3H1-type zinc finger spans residues 26–55 (NAKDTLCRNITIYGRCRYEDKGCAFNHDPH). Low complexity predominate over residues 75 to 102 (SFTPSLLSSNGSSPTSTPATTKKMTTIS). A compositionally biased stretch (polar residues) spans 115–133 (SVVSRSNASTPGLRQDTVT). A pseudokinase domain region spans residues 263 to 525 (QTLPNTQLPA…NIDVFITGIS (263 aa)). Residues Arg315, 364–371 (DYHPLSKT), and 425–426 (SK) contribute to the ATP site. The stretch at 526–564 (SQLMSTFDSALHLDDQLTSDLSRELENGRLVRLMAKLNF) forms a coiled coil. The segment at 565–662 (VNERPEYEHD…ALMKPARRMH (98 aa)) is knob domain.

Belongs to the protein kinase superfamily. PAN3 family. Homodimer. Forms a heterotrimer with a catalytic subunit pan2 to form the poly(A)-nuclease (PAN) deadenylation complex. Interacts (via PAM-2 motif) with poly(A)-binding protein pab1 (via PABC domain), conferring substrate specificity of the enzyme complex.

The protein localises to the cytoplasm. In terms of biological role, regulatory subunit of the poly(A)-nuclease (PAN) deadenylation complex, one of two cytoplasmic mRNA deadenylases involved in mRNA turnover. PAN specifically shortens poly(A) tails of RNA and the activity is stimulated by poly(A)-binding protein pab1. PAN deadenylation is followed by rapid degradation of the shortened mRNA tails by the CCR4-NOT complex. Deadenylated mRNAs are then degraded by two alternative mechanisms, namely exosome-mediated 3'-5' exonucleolytic degradation, or deadenylation-dependent mRNA decaping and subsequent 5'-3' exonucleolytic degradation by xrn1. May also be involved in post-transcriptional maturation of mRNA poly(A) tails. pan3 acts as a positive regulator for PAN activity, recruiting the catalytic subunit pan2 to mRNA via its interaction with RNA and with pab1. The polypeptide is PAN2-PAN3 deadenylation complex subunit PAN3 (Aspergillus fumigatus (strain ATCC MYA-4609 / CBS 101355 / FGSC A1100 / Af293) (Neosartorya fumigata)).